Reading from the N-terminus, the 93-residue chain is Stage III sporulation protein D (93 aa).

Residues 4-75 form the HTH deoR-type domain; that stretch reads YIKERTIKIG…IRHLRGGEAT (72 aa). The segment at residues 21–40 is a DNA-binding region (H-T-H motif); the sequence is KTVRVIAKEFGVSKSTVHKD.

Its function is as follows. This protein regulates the transcription of sigK, which encodes mother cell chamber RNA polymerase sigma-factor (sigma K). The chain is Stage III sporulation protein D (spoIIID) from Bacillus subtilis (strain 168).